The following is a 447-amino-acid chain: ATP-dependent protease ATPase subunit HslU (447 aa).

ATP-binding positions include isoleucine 17 and 59–64 (GVGKTE). Residues 136–160 (PPARGGFQGEPTAEEKPTEKKESAT) are disordered. The span at 148–159 (AEEKPTEKKESA) shows a compositional bias: basic and acidic residues. Residues aspartate 260, glutamate 325, and arginine 397 each contribute to the ATP site.

This sequence belongs to the ClpX chaperone family. HslU subfamily. In terms of assembly, a double ring-shaped homohexamer of HslV is capped on each side by a ring-shaped HslU homohexamer. The assembly of the HslU/HslV complex is dependent on binding of ATP.

It is found in the cytoplasm. Functionally, ATPase subunit of a proteasome-like degradation complex; this subunit has chaperone activity. The binding of ATP and its subsequent hydrolysis by HslU are essential for unfolding of protein substrates subsequently hydrolyzed by HslV. HslU recognizes the N-terminal part of its protein substrates and unfolds these before they are guided to HslV for hydrolysis. This chain is ATP-dependent protease ATPase subunit HslU, found in Coxiella burnetii (strain RSA 331 / Henzerling II).